A 266-amino-acid chain; its full sequence is MFTLADHTFSSRLLTGTGKFTNSHTMLASIVASESQIVTLAMKRIDLKLGQDDILTPLLAQGLTLLPNTSGARNAKEAIFAAELARDLLDTHWLKLEIHPDPKYLMPDPIETLLAAEKLCQMGFKVLPYVHADPVLCRRLEEVGCAAVMPLASPIGSNQGLATEAFLKIIIEQAKVPVIVDAGLGAPSQACRAMEMGADAVLVNTAIASSRSPIIMAKCFADAVKAGREAYLAGLGQVQPHASHTSPLTGFLQQMPAENTNTVEPL.

K95 acts as the Schiff-base intermediate with DXP in catalysis. 1-deoxy-D-xylulose 5-phosphate-binding positions include G156, 182-183 (AG), and 204-205 (NT).

The protein belongs to the ThiG family. As to quaternary structure, homotetramer. Forms heterodimers with either ThiH or ThiS.

The protein localises to the cytoplasm. It carries out the reaction [ThiS sulfur-carrier protein]-C-terminal-Gly-aminoethanethioate + 2-iminoacetate + 1-deoxy-D-xylulose 5-phosphate = [ThiS sulfur-carrier protein]-C-terminal Gly-Gly + 2-[(2R,5Z)-2-carboxy-4-methylthiazol-5(2H)-ylidene]ethyl phosphate + 2 H2O + H(+). The protein operates within cofactor biosynthesis; thiamine diphosphate biosynthesis. Its function is as follows. Catalyzes the rearrangement of 1-deoxy-D-xylulose 5-phosphate (DXP) to produce the thiazole phosphate moiety of thiamine. Sulfur is provided by the thiocarboxylate moiety of the carrier protein ThiS. In vitro, sulfur can be provided by H(2)S. The polypeptide is Thiazole synthase (Shewanella denitrificans (strain OS217 / ATCC BAA-1090 / DSM 15013)).